The sequence spans 354 residues: Chorismate synthase (354 aa).

Arg-46 provides a ligand contact to NADP(+). Residues 123 to 125, 239 to 240, Gly-284, 299 to 303, and Arg-325 each bind FMN; these read RSS, NA, and KPVAT.

It belongs to the chorismate synthase family. As to quaternary structure, homotetramer. The cofactor is FMNH2.

The enzyme catalyses 5-O-(1-carboxyvinyl)-3-phosphoshikimate = chorismate + phosphate. Its pathway is metabolic intermediate biosynthesis; chorismate biosynthesis; chorismate from D-erythrose 4-phosphate and phosphoenolpyruvate: step 7/7. Its function is as follows. Catalyzes the anti-1,4-elimination of the C-3 phosphate and the C-6 proR hydrogen from 5-enolpyruvylshikimate-3-phosphate (EPSP) to yield chorismate, which is the branch point compound that serves as the starting substrate for the three terminal pathways of aromatic amino acid biosynthesis. This reaction introduces a second double bond into the aromatic ring system. The protein is Chorismate synthase of Azobacteroides pseudotrichonymphae genomovar. CFP2.